A 28-amino-acid polypeptide reads, in one-letter code: Cysteine-rich venom protein asurin-2 (28 aa).

The span at 1–15 (SNKKDYRKEIVDKHN) shows a compositional bias: basic and acidic residues. The tract at residues 1–28 (SNKKDYRKEIVDKHNALSRSVKPTASNM) is disordered. The span at 17-28 (LSRSVKPTASNM) shows a compositional bias: polar residues.

This sequence belongs to the CRISP family. Contains 8 disulfide bonds. Expressed by the venom gland.

The protein resides in the secreted. Blocks contraction of smooth muscle elicited by high potassium-induced depolarization, but does not block caffeine-stimulated contraction. May target voltage-gated calcium channels on smooth muscle. The sequence is that of Cysteine-rich venom protein asurin-2 from Austrelaps superbus (Lowland copperhead snake).